Consider the following 448-residue polypeptide: D-inositol 3-phosphate glycosyltransferase (448 aa).

1D-myo-inositol 3-phosphate-binding positions include His-35, Asp-46–Asn-51, Lys-104, Tyr-137, Thr-161, and Arg-181. Residue Gly-49 coordinates UDP-N-acetyl-alpha-D-glucosamine. Residues Arg-255, Lys-260, and Met-321 each contribute to the UDP-N-acetyl-alpha-D-glucosamine site. The Mg(2+) site is built by Tyr-330, Arg-331, and Ala-333. Glu-343 and Glu-351 together coordinate UDP-N-acetyl-alpha-D-glucosamine. Thr-357 contacts Mg(2+).

This sequence belongs to the glycosyltransferase group 1 family. MshA subfamily. In terms of assembly, homodimer.

The catalysed reaction is 1D-myo-inositol 3-phosphate + UDP-N-acetyl-alpha-D-glucosamine = 1D-myo-inositol 2-acetamido-2-deoxy-alpha-D-glucopyranoside 3-phosphate + UDP + H(+). Functionally, catalyzes the transfer of a N-acetyl-glucosamine moiety to 1D-myo-inositol 3-phosphate to produce 1D-myo-inositol 2-acetamido-2-deoxy-glucopyranoside 3-phosphate in the mycothiol biosynthesis pathway. This is D-inositol 3-phosphate glycosyltransferase from Acidothermus cellulolyticus (strain ATCC 43068 / DSM 8971 / 11B).